A 366-amino-acid polypeptide reads, in one-letter code: MAISDNGGGSVGLCYGSEFSISDHWDKLTRPSSIKVVGDGDLSRSAELIVEPLESGFALTLGNALRRVMMSSLRGFAVYGIEVEGVSHELTSLSGVREDVADLVLNLSMLRVKLLTSESRVLRLVAKGPGEITAAAIGDSEGCVVLNKDLHICTLGKDVDFSMKIYVNSGKGYVPASEYRAASRSGATSEVGPGFIATNALYSPVKKVAFRIESSRIGQFTDYDRLVISVETDGSISPDEAVAVSARVLQDQLQSFIGSEEVEGESRKKVDKEEGALPYDHNLLRKVDELELSVRSHNCLKNDNITYIGDLVQKTESDMLRTPNFGRKSLNEINEVLASMNLHLGMKVPNWPPESIENLSKQYSED.

The segment at 1-260 is alpha N-terminal domain (alpha-NTD); it reads MAISDNGGGS…DQLQSFIGSE (260 aa). Positions 274-366 are alpha C-terminal domain (alpha-CTD); the sequence is EGALPYDHNL…ENLSKQYSED (93 aa).

Belongs to the RNA polymerase alpha chain family. In terms of assembly, homodimer. The RNAP catalytic core consists of 2 alpha, 1 beta, 1 beta' and 1 omega subunit. When a sigma factor is associated with the core the holoenzyme is formed, which can initiate transcription.

The enzyme catalyses RNA(n) + a ribonucleoside 5'-triphosphate = RNA(n+1) + diphosphate. Functionally, DNA-dependent RNA polymerase catalyzes the transcription of DNA into RNA using the four ribonucleoside triphosphates as substrates. The chain is DNA-directed RNA polymerase subunit alpha from Anaplasma marginale (strain St. Maries).